Consider the following 354-residue polypeptide: Holliday junction branch migration complex subunit RuvB (354 aa).

The span at 1 to 10 (MAIKRNQGSN) shows a compositional bias: polar residues. A disordered region spans residues 1-36 (MAIKRNQGSNPKPEKKERLTKAETHQEQDNLEESIR). Residues 12-36 (KPEKKERLTKAETHQEQDNLEESIR) are compositionally biased toward basic and acidic residues. A large ATPase domain (RuvB-L) region spans residues 13-196 (PEKKERLTKA…FGLIQRLKFY (184 aa)). ATP is bound by residues isoleucine 35, arginine 36, glycine 77, lysine 80, threonine 81, threonine 82, 143 to 145 (EDY), arginine 186, tyrosine 196, and arginine 233. Threonine 81 is a binding site for Mg(2+). Residues 197–267 (EPEELALIIK…LAAEALDIYQ (71 aa)) form a small ATPAse domain (RuvB-S) region. The head domain (RuvB-H) stretch occupies residues 270 to 354 (PQGLDWTDRL…EEQLSIFSEQ (85 aa)). Positions 325 and 330 each coordinate DNA.

It belongs to the RuvB family. Homohexamer. Forms an RuvA(8)-RuvB(12)-Holliday junction (HJ) complex. HJ DNA is sandwiched between 2 RuvA tetramers; dsDNA enters through RuvA and exits via RuvB. An RuvB hexamer assembles on each DNA strand where it exits the tetramer. Each RuvB hexamer is contacted by two RuvA subunits (via domain III) on 2 adjacent RuvB subunits; this complex drives branch migration. In the full resolvosome a probable DNA-RuvA(4)-RuvB(12)-RuvC(2) complex forms which resolves the HJ.

The protein resides in the cytoplasm. The catalysed reaction is ATP + H2O = ADP + phosphate + H(+). In terms of biological role, the RuvA-RuvB-RuvC complex processes Holliday junction (HJ) DNA during genetic recombination and DNA repair, while the RuvA-RuvB complex plays an important role in the rescue of blocked DNA replication forks via replication fork reversal (RFR). RuvA specifically binds to HJ cruciform DNA, conferring on it an open structure. The RuvB hexamer acts as an ATP-dependent pump, pulling dsDNA into and through the RuvAB complex. RuvB forms 2 homohexamers on either side of HJ DNA bound by 1 or 2 RuvA tetramers; 4 subunits per hexamer contact DNA at a time. Coordinated motions by a converter formed by DNA-disengaged RuvB subunits stimulates ATP hydrolysis and nucleotide exchange. Immobilization of the converter enables RuvB to convert the ATP-contained energy into a lever motion, pulling 2 nucleotides of DNA out of the RuvA tetramer per ATP hydrolyzed, thus driving DNA branch migration. The RuvB motors rotate together with the DNA substrate, which together with the progressing nucleotide cycle form the mechanistic basis for DNA recombination by continuous HJ branch migration. Branch migration allows RuvC to scan DNA until it finds its consensus sequence, where it cleaves and resolves cruciform DNA. The protein is Holliday junction branch migration complex subunit RuvB of Crocosphaera subtropica (strain ATCC 51142 / BH68) (Cyanothece sp. (strain ATCC 51142)).